A 245-amino-acid polypeptide reads, in one-letter code: MPASMFSIDNILAARPRCKDSVLLPPSAPVVFPSLHGDSLYGAASDYGGFYSRAVAPGSALPAVGRSRLGYNNYYYGQLHVATSPVGPSCCGAVPPLGAQQCSCVPPAGYEGAGSVLMSPVPHQMLPYMNVGTLSRTELQLLNQLHCRRKRRHRTIFTDEQLEALENLFQETKYPDVGTREQLARKVHLREEKVEVWFKNRRAKWRRQKRSSSEESENAQKWNKASKTSPEKRQEDGKSDLDSDS.

Positions 150–209 form a DNA-binding region, homeobox; it reads KRRHRTIFTDEQLEALENLFQETKYPDVGTREQLARKVHLREEKVEVWFKNRRAKWRRQK. Positions 203-245 are disordered; that stretch reads AKWRRQKRSSSEESENAQKWNKASKTSPEKRQEDGKSDLDSDS. Over residues 219 to 228 the composition is skewed to polar residues; it reads AQKWNKASKT. The span at 229–245 shows a compositional bias: basic and acidic residues; it reads SPEKRQEDGKSDLDSDS.

It belongs to the paired homeobox family. Bicoid subfamily.

The protein resides in the nucleus. In terms of biological role, involved in the development of the organizer region in the gastrula (Hensen node in chicken). The chain is Homeobox protein goosecoid (GSC) from Gallus gallus (Chicken).